The primary structure comprises 436 residues: 3-ketoacyl-CoA thiolase (436 aa).

C99 functions as the Acyl-thioester intermediate in the catalytic mechanism. Active-site proton acceptor residues include H392 and C422.

Belongs to the thiolase-like superfamily. Thiolase family. Heterotetramer of two alpha chains (FadJ) and two beta chains (FadI).

It localises to the cytoplasm. The enzyme catalyses an acyl-CoA + acetyl-CoA = a 3-oxoacyl-CoA + CoA. It functions in the pathway lipid metabolism; fatty acid beta-oxidation. Catalyzes the final step of fatty acid oxidation in which acetyl-CoA is released and the CoA ester of a fatty acid two carbons shorter is formed. The polypeptide is 3-ketoacyl-CoA thiolase (Escherichia coli O81 (strain ED1a)).